The sequence spans 205 residues: Putative C-type lectin protein FPV001/FPV260 (205 aa).

A C-type lectin domain is found at 84 to 187 (CPRDWISHNG…CSVRRYLVCK (104 aa)).

The sequence is that of Putative C-type lectin protein FPV001/FPV260 from Fowlpox virus (strain NVSL) (FPV).